The chain runs to 312 residues: MKLFTLLLPALTSAHSLSTLLSTHPTLSTLHSLLKQFSLLDDFNTLANITVIAPTNQAYLDLANWGFNVSQIPAPVARALFQYHVLDGEWESESIIGKGKVVHTYLKPPVLTNVTAGAAVKLSSVDGTIMTESGLGVAGGVEDVNLRFDGGVLHTLNASMVLPHNITLTAQINGLGRFLELMNRAGVVAEFEGLKDVTVFVPHDDALEKADVGKMSKEQLASLLRGHVVPNRVLYGEVFGKKGGYKSSNGWEIHVGKTADGTLTVNGIKVVKEDVILYAGVAHVIDKVLVADRVEHKGDRSYLHLDAQKPLR.

A signal peptide spans 1 to 16 (MKLFTLLLPALTSAHS). 2 consecutive FAS1 domains span residues 17–160 (LSTL…NASM) and 162–289 (LPHN…DKVL). Asparagine 48, asparagine 68, asparagine 113, asparagine 157, and asparagine 165 each carry an N-linked (GlcNAc...) asparagine glycan.

This sequence belongs to the fasciclin-like AGP family.

It participates in secondary metabolite biosynthesis. Fasciclin-like arabinogalactan protein; part of the gene cluster that mediates the biosynthesis of elsinochrome C, a perelyenequinone phytotoxin structurally similar to cercosporin. The first step of elsinochrome C biosynthesis is performed by the polyketide synthase elcA which catalyzes the formation of nor-toralactone. The starter unit acyltransferase (SAT) domain of elcA initiates polyketide extension by the selective utilization of acetyl-CoA, which is elongated to the heptaketide in the beta-ketoacyl synthase (KS) domain by successive condensations with six malonyl units introduced by the malonyl acyltransferase (MAT) domain. The product template (PT) domain catalyzes C4-C9 and C2-C11 aldol cyclizations and dehydrations to a trihydroxynaphthalene, which is thought to be delivered to the thioesterase (TE) domain for product release. The bifunctional enzyme elcB then methylates nor-toralactone to toralactone before conducting an unusual oxidative aromatic ring opening. The next step in perylenequinone biosynthesis is an O-methylation at the nascent OH-6 of the elcB product performed by the O-methyltransferase elcD. The oxidative coupling of the two monomeric naphthol units in perylenequinone biosynthesis is catalyzed by the FAD-dependent monooxygenase elcE and the multicopper oxidase elcG. ElcG might catalyze the first intermolecular coupling in a regio- and stereo-selective manner via a phenol radical coupling mechanism and the elcE could forge the second C-C bond intramolecularly via a hydride transfer mechanism. The fasciclin domain-containing protein elcF might also play a role duting this step. The last piece of the puzzle in the biosynthesis of elsinochrome C is the additional annulation by enolate coupling to afford the dihydrobenzo(ghi)perylenequinone system, catalyzed by the FAD-dependent monooxygenase elcH. The sequence is that of Fasciclin-like arabinogalactan protein elcF from Phaeosphaeria nodorum (strain SN15 / ATCC MYA-4574 / FGSC 10173) (Glume blotch fungus).